A 402-amino-acid polypeptide reads, in one-letter code: Nuclear hormone receptor family member nhr-96 (402 aa).

The segment at residues 4–79 (FGLCAVCGQV…VGMDVKKIQQ (76 aa)) is a DNA-binding region (nuclear receptor). NR C4-type zinc fingers lie at residues 7-27 (CAVCGQVTTGKNFGVISCRSC) and 44-67 (CVKASCAIFENGKFKCKKCRLKRC). The NR LBD domain occupies 154-402 (NYYNSLELLT…FSDPEMFELT (249 aa)).

It belongs to the nuclear hormone receptor family.

It localises to the nucleus. Orphan nuclear receptor. The chain is Nuclear hormone receptor family member nhr-96 (nhr-96) from Caenorhabditis elegans.